We begin with the raw amino-acid sequence, 20 residues long: Fibrinogen beta chain (20 aa).

Positions 1 to 12 (IIDYYDEGEEDR) are enriched in acidic residues. The interval 1 to 20 (IIDYYDEGEEDRDVGVVDAR) is disordered.

Heterohexamer; disulfide linked. Contains 2 sets of 3 non-identical chains (alpha, beta and gamma). The 2 heterotrimers are in head to head conformation with the N-termini in a small central domain. In terms of processing, conversion of fibrinogen to fibrin is triggered by thrombin, which cleaves fibrinopeptides A and B from alpha and beta chains, and thus exposes the N-terminal polymerization sites responsible for the formation of the soft clot.

It is found in the secreted. Its function is as follows. Cleaved by the protease thrombin to yield monomers which, together with fibrinogen alpha (FGA) and fibrinogen gamma (FGG), polymerize to form an insoluble fibrin matrix. Fibrin has a major function in hemostasis as one of the primary components of blood clots. In addition, functions during the early stages of wound repair to stabilize the lesion and guide cell migration during re-epithelialization. Was originally thought to be essential for platelet aggregation, based on in vitro studies using anticoagulated blood. However subsequent studies have shown that it is not absolutely required for thrombus formation in vivo. Enhances expression of SELP in activated platelets. Maternal fibrinogen is essential for successful pregnancy. Fibrin deposition is also associated with infection, where it protects against IFNG-mediated hemorrhage. May also facilitate the antibacterial immune response via both innate and T-cell mediated pathways. The protein is Fibrinogen beta chain (FGB) of Felis catus (Cat).